The following is a 264-amino-acid chain: Small ribosomal subunit protein uS3 (264 aa).

The KH type-2 domain occupies 39 to 107 (VREFLKKKLK…PVHVNIEEIR (69 aa)). A disordered region spans residues 211–264 (NDAPVVEEPQEERRKRPGRPEGRRREGEGRPGGQRRGAGAGGRRSGGADAKTGE). The segment covering 221–239 (EERRKRPGRPEGRRREGEG) has biased composition (basic and acidic residues). Over residues 240 to 255 (RPGGQRRGAGAGGRRS) the composition is skewed to gly residues.

This sequence belongs to the universal ribosomal protein uS3 family. In terms of assembly, part of the 30S ribosomal subunit. Forms a tight complex with proteins S10 and S14.

In terms of biological role, binds the lower part of the 30S subunit head. Binds mRNA in the 70S ribosome, positioning it for translation. The sequence is that of Small ribosomal subunit protein uS3 from Ralstonia nicotianae (strain ATCC BAA-1114 / GMI1000) (Ralstonia solanacearum).